The sequence spans 482 residues: Pancreatic lipase-related protein 2 (482 aa).

An N-terminal signal peptide occupies residues 1–30 (MPMDVRGCLFPSVQMLLCWLVSLLLATVGG). Cys34 and Cys40 are disulfide-bonded. The N-linked (GlcNAc...) asparagine glycan is linked to Asn92. The required for galactolipase activity stretch occupies residues 106-118 (IHGFIDKGEEGWL). An intrachain disulfide couples Cys122 to Cys133. Residue Ser184 is the Nucleophile of the active site. Asp208 acts as the Charge relay system in catalysis. Ca(2+) contacts are provided by Glu219, Arg222, Asp224, and Asp227. Cys269 and Cys293 are disulfide-bonded. Residues 270-292 (QKNILSTIVDINGIWEGTRNFAA) are required for galactolipase activity. His295 acts as the Charge relay system in catalysis. 2 disulfides stabilise this stretch: Cys317–Cys328 and Cys331–Cys336. Asn366 and Asn441 each carry an N-linked (GlcNAc...) asparagine glycan. Positions 370–482 (WRYKVSVTLS…EDVLQSLYPC (113 aa)) constitute a PLAT domain. Residues Cys466 and Cys482 are joined by a disulfide bond.

The protein belongs to the AB hydrolase superfamily. Lipase family. As to expression, expressed in acinar cells of pancreas (at protein level).

It localises to the secreted. The protein localises to the zymogen granule membrane. It is found in the cell projection. Its subcellular location is the neuron projection. The enzyme catalyses a triacylglycerol + H2O = a diacylglycerol + a fatty acid + H(+). The catalysed reaction is a 1,2-diacyl-3-O-(beta-D-galactosyl)-sn-glycerol + 2 H2O = 3-beta-D-galactosyl-sn-glycerol + 2 a fatty acid + 2 H(+). It catalyses the reaction 1,2,3-tri-(9Z-octadecenoyl)-glycerol + H2O = di-(9Z)-octadecenoylglycerol + (9Z)-octadecenoate + H(+). It carries out the reaction di-(9Z)-octadecenoylglycerol + H2O = (9Z-octadecenoyl)-glycerol + (9Z)-octadecenoate + H(+). The enzyme catalyses (9Z-octadecenoyl)-glycerol + H2O = glycerol + (9Z)-octadecenoate + H(+). The catalysed reaction is 1-(9Z-octadecenoyl)-glycerol + H2O = glycerol + (9Z)-octadecenoate + H(+). It catalyses the reaction 1,2,3-tripropanoylglycerol + H2O = dipropanoylglycerol + propanoate + H(+). It carries out the reaction 1,2,3-tributanoylglycerol + H2O = dibutanoylglycerol + butanoate + H(+). The enzyme catalyses 1,2,3-trioctanoylglycerol + H2O = dioctanoylglycerol + octanoate + H(+). The catalysed reaction is 1,2-didecanoylglycerol + H2O = decanoylglycerol + decanoate + H(+). It catalyses the reaction long chain 1,2-diacyl-3-O-beta-D-galactosyl-sn-glycerol + H2O = long chain acyl-3-O-beta-D-galactosyl-sn-glycerol + a fatty acid + H(+). It carries out the reaction 1,2-dioctanoyl-3-O-beta-D-galactosyl-sn-glycerol + H2O = octanoyl-3-(beta-D-galactosyl)-sn-glycerol + octanoate + H(+). The enzyme catalyses 1,2-didodecanoyl-3-beta-D-galactosyl-sn-glycerol + H2O = dodecanoyl-3-beta-D-galactosyl-sn-glycerol + dodecanoate + H(+). The catalysed reaction is 1-beta-D-galactosyl-2,3-didodecanoyl-sn-glycerol + H2O = 1-beta-D-galactosyl-dodecanoyl-sn-glycerol + dodecanoate + H(+). It catalyses the reaction a 1,2-diacyl-3-O-[alpha-D-galactosyl-(1-&gt;6)-beta-D-galactosyl]-sn-glycerol + H2O = acyl-3-O-[alpha-D-galactosyl-(1-&gt;6)-beta-D-galactosyl]-sn-glycerol + a fatty acid + H(+). It carries out the reaction long chain 1,2-diacyl-3-O-[alpha-D-galactosyl-(1-&gt;6)-beta-D-galactosyl]-sn-glycerol + H2O = long chain acyl-3-O-[alpha-D-galactosyl-(1-&gt;6)-beta-D-galactosyl]-sn-glycerol + a fatty acid + H(+). The enzyme catalyses 1,2-dioctanoyl-3-O-[alpha-D-galactosyl-(1-&gt;6)-beta-D-galactosyl]-sn-glycerol + H2O = octanoyl-3-O-[alpha-D-galactosyl-(1-&gt;6)-beta-D-galactosyl]-sn-glycerol + octanoate + H(+). The catalysed reaction is 1,2-didodecanoyl-3-O-[alpha-D-galactosyl-(1-&gt;6)-beta-D-galactosyl]-sn-glycerol + H2O = dodecanoyl-3-O-[alpha-D-galactosyl-(1-&gt;6)-beta-D-galactosyl]-sn-glycerol + dodecanoate + H(+). It catalyses the reaction a 1,2-diacyl-sn-glycero-3-phosphocholine + H2O = a monoacyl-sn-glycero-3-phosphocholine + a fatty acid + H(+). It functions in the pathway glycerolipid metabolism; triacylglycerol degradation. Its pathway is glycolipid metabolism. Its activity is regulated as follows. CLPS stimulates triacylglycerol lipase activity. Triacylglycerol lipase activity is not inhibited by increasing bile salt concentration. Its function is as follows. Lipase that primarily hydrolyzes triglycerides and galactosylglycerides. In neonates, may play a major role in pancreatic digestion of dietary fats such as milk fat globules enriched in long-chain triglycerides. Hydrolyzes short-, medium- and long-chain fatty acyls in triglycerides without apparent positional specificity. Can completely deacylate triacylglycerols. When the liver matures and bile salt synthesis increases, likely functions mainly as a galactolipase and monoacylglycerol lipase. Hydrolyzes monogalactosyldiglycerols (MGDG) and digalactosyldiacylglycerols (DGDG) present in a plant-based diet, releasing long-chain polyunsaturated fatty acids. Hydrolyzes medium- and long-chain fatty acyls in galactolipids. May act together with LIPF to hydrolyze partially digested triglycerides. Hydrolyzes long-chain monoglycerides with high efficiency. In cytotoxic T cells, contributes to perforin-dependent cell lysis, but is unlikely to mediate direct cytotoxicity. Also has low phospholipase activity. In neurons, required for the localization of the phospholipid 1-oleoyl-2-palmitoyl-PC (OPPC) to neurite tips through acyl chain remodeling of membrane phospholipids. The resulting OPPC-rich lipid membrane domain recruits the t-SNARE protein STX4 by selectively interacting with the STX4 transmembrane domain and this promotes surface expression of the dopamine transporter SLC6A3/DAT at neurite tips by facilitating fusion of SLC6A3-containing transport vesicles with the plasma membrane. The chain is Pancreatic lipase-related protein 2 from Mus musculus (Mouse).